The chain runs to 215 residues: Probable phosphoglycerate mutase GpmB (215 aa).

Residues 8-15, 21-22, Arg58, Arg60, 82-85, and 151-152 each bind substrate; these read RHGETLWN, QG, ELNM, and GM. Catalysis depends on His9, which acts as the Tele-phosphohistidine intermediate. Glu82 serves as the catalytic Proton donor/acceptor.

This sequence belongs to the phosphoglycerate mutase family. GpmB subfamily.

The catalysed reaction is (2R)-2-phosphoglycerate = (2R)-3-phosphoglycerate. The protein operates within carbohydrate degradation; glycolysis; pyruvate from D-glyceraldehyde 3-phosphate: step 3/5. The protein is Probable phosphoglycerate mutase GpmB of Erwinia tasmaniensis (strain DSM 17950 / CFBP 7177 / CIP 109463 / NCPPB 4357 / Et1/99).